A 23-amino-acid chain; its full sequence is Magainin-BM2 (23 aa).

In terms of tissue distribution, expressed by the skin glands.

It is found in the secreted. Antimicrobial peptide. The chain is Magainin-BM2 from Xenopus boumbaensis (Mawa clawed frog).